The chain runs to 814 residues: Syn-copalyl diphosphate synthase TPS3, chloroplastic (814 aa).

Residues 1 to 52 constitute a chloroplast transit peptide; it reads MCSLSTLSPNFSNAYGSKSVSSTASRFPCWQRSNETWKTQSREVIHWTYVVR. Lys-248 is a substrate binding site. Positions 386 and 388 each coordinate Mg(2+). A DXDD motif motif is present at residues 386–389; it reads DIDD. Substrate is bound at residue Lys-472.

Belongs to the terpene synthase family. Mg(2+) is required as a cofactor. In terms of tissue distribution, mostly expressed in trichomes of leaves and fruits.

It localises to the plastid. The protein localises to the chloroplast. The catalysed reaction is (2E,6E,10E)-geranylgeranyl diphosphate = 9alpha-copalyl diphosphate. Its pathway is secondary metabolite biosynthesis; terpenoid biosynthesis. Functionally, involved in the biosynthesis of labdane-type diterpenoid including cleroda-dienols, and peregrinol lactones and furan derivatives, dopaminergic diterpenoids that can bind to dopamine receptors in the human pituitary gland, have probably ability to lower prolactin levels, and are used to treat menstrual cycle disorders (e.g. premenstrual syndrome and mastodynia). Terpene synthase that produces syn-copalyl diphosophate from geranylgeranyl diphosphate (GGPP). The protein is Syn-copalyl diphosphate synthase TPS3, chloroplastic of Vitex agnus-castus (Chaste tree).